The primary structure comprises 276 residues: Rhomboid protease GlpG (276 aa).

The next 6 membrane-spanning stretches (helical) occupy residues G94 to L114, A142 to G162, I169 to Q189, F192 to W212, L229 to I249, and G252 to G272. Catalysis depends on S201, which acts as the Nucleophile. The active site involves H254.

The protein belongs to the peptidase S54 family.

It localises to the cell inner membrane. It catalyses the reaction Cleaves type-1 transmembrane domains using a catalytic dyad composed of serine and histidine that are contributed by different transmembrane domains.. Functionally, rhomboid-type serine protease that catalyzes intramembrane proteolysis. The sequence is that of Rhomboid protease GlpG from Klebsiella pneumoniae (strain 342).